A 134-amino-acid chain; its full sequence is Profilin-4 (134 aa).

A disulfide bridge links Cys-13 with Cys-118. Positions 84–100 (AVIRGKKGSGGITIKKT) match the Involved in PIP2 interaction motif. The residue at position 114 (Thr-114) is a Phosphothreonine.

This sequence belongs to the profilin family. As to quaternary structure, occurs in many kinds of cells as a complex with monomeric actin in a 1:1 ratio. Post-translationally, phosphorylated by MAP kinases.

It is found in the cytoplasm. It localises to the cytoskeleton. Binds to actin and affects the structure of the cytoskeleton. At high concentrations, profilin prevents the polymerization of actin, whereas it enhances it at low concentrations. The chain is Profilin-4 from Olea europaea (Common olive).